We begin with the raw amino-acid sequence, 341 residues long: Myb-related transcription factor, partner of profilin (341 aa).

The Myb-like domain maps to 8–80; the sequence is VTRLRKPRFS…EVQKRWNDFK (73 aa). Disordered stretches follow at residues 84-103, 180-210, and 309-341; these read KEKL…EEAM, LPHL…PSGV, and AEPP…WKNL. Over residues 184–200 the composition is skewed to pro residues; it reads TPSPDPSECPSPPPPGS. The segment covering 321–341 has biased composition (basic residues); sequence NKRKRFGYLSQRKRRGRWKNL.

The protein localises to the nucleus. Transcriptional repressor; DNA-binding protein that specifically recognizes the core sequence 5'-YAAC[GT]G-3'. This Xenopus laevis (African clawed frog) protein is Myb-related transcription factor, partner of profilin (mypop).